Reading from the N-terminus, the 1325-residue chain is Nucleoporin nup146 (1325 aa).

Disordered regions lie at residues 1–20, 453–474, 758–951, and 973–994; these read MNAE…AGGS, VRAS…FVKN, GEGL…PKIH, and FPKQ…QESL. The span at 763-778 shows a compositional bias: polar residues; the sequence is QQKTSKALPSTGITKL. Basic and acidic residues predominate over residues 779-791; the sequence is SENDNEKAEESNE. Polar residues predominate over residues 792-801; the sequence is TKGFNTTIAK. Positions 802 to 811 are enriched in basic and acidic residues; that stretch reads QNDKSSKSEG. 2 stretches are compositionally biased toward polar residues: residues 816–835 and 850–861; these read ANMS…SKPS and FTFNKPSETPPF. The segment covering 867–881 has biased composition (basic and acidic residues); it reads LVEKESKQDVSDTSD. A Phosphothreonine modification is found at Thr899. Residues 927-937 are compositionally biased toward acidic residues; sequence SEIEDQDEESS. At Thr946 the chain carries Phosphothreonine. 3 positions are modified to phosphoserine: Ser1041, Ser1043, and Ser1044.

Its subcellular location is the cytoplasm. The protein localises to the nucleus. Functionally, functions as a component of the nuclear pore complex (NPC). NPC components, collectively referred to as nucleoporins (NUPs), can play the role of both NPC structural components and of docking or interaction partners for transiently associated nuclear transport factors. Active directional transport is assured by both, a Phe-Gly (FG) repeat affinity gradient for these transport factors across the NPC and a transport cofactor concentration gradient across the nuclear envelope. The chain is Nucleoporin nup146 (nup146) from Schizosaccharomyces pombe (strain 972 / ATCC 24843) (Fission yeast).